The primary structure comprises 258 residues: Thiamine thiazole synthase (258 aa).

NAD(+) contacts are provided by residues Ser-36, 55–56, Gly-63, Val-127, and 153–155; these read ER and HVD. Residues Asp-155 and His-170 each contribute to the Fe cation site. Met-224 is a binding site for NAD(+). Residue Arg-234 participates in glycine binding.

Belongs to the THI4 family. As to quaternary structure, homooctamer; tetramer of dimers. Fe(2+) serves as cofactor.

The catalysed reaction is hydrogen sulfide + glycine + NAD(+) = ADP-5-ethyl-4-methylthiazole-2-carboxylate + nicotinamide + 3 H2O + H(+). Its pathway is cofactor biosynthesis; thiamine diphosphate biosynthesis. Functionally, involved in the biosynthesis of the thiazole moiety of thiamine. Catalyzes the conversion of NAD and glycine to adenosine diphosphate 5-(2-hydroxyethyl)-4-methylthiazole-2-carboxylate (ADT), an adenylated thiazole intermediate, using free sulfide as a source of sulfur. The polypeptide is Thiamine thiazole synthase (Desulfosudis oleivorans (strain DSM 6200 / JCM 39069 / Hxd3) (Desulfococcus oleovorans)).